We begin with the raw amino-acid sequence, 464 residues long: Argininosuccinate lyase (464 aa).

Residue Ala2 is modified to N-acetylalanine. N6-acetyllysine is present on Lys7. Residue Ser27 coordinates 2-(N(omega)-L-arginino)succinate. Lys69 carries the post-translational modification N6-acetyllysine. Residues Asn114 and Thr159 each contribute to the 2-(N(omega)-L-arginino)succinate site. His160 functions as the Proton acceptor in the catalytic mechanism. The active-site Proton donor is Ser281. Lys288 carries the post-translational modification N6-acetyllysine. Positions 289, 321, 326, and 329 each coordinate 2-(N(omega)-L-arginino)succinate.

This sequence belongs to the lyase 1 family. Argininosuccinate lyase subfamily. As to quaternary structure, homotetramer. Forms tissue-specific complexes with ASS1, SLC7A1, HSP90AA1 and nitric oxide synthase NOS1, NOS2 or NOS3; the complex maintenance is independent of ASL catalytic function. Post-translationally, acetylation modifies enzyme activity in response to alterations of extracellular nutrient availability. Acetylation increased with trichostin A (TSA) or with nicotinamide (NAM). Glucose increases acetylation by about a factor of 3 with decreasing enzyme activity. Acetylation on Lys-288 is decreased on the addition of extra amino acids resulting in activation of enzyme activity.

The catalysed reaction is 2-(N(omega)-L-arginino)succinate = fumarate + L-arginine. It participates in amino-acid biosynthesis; L-arginine biosynthesis; L-arginine from L-ornithine and carbamoyl phosphate: step 3/3. The protein operates within nitrogen metabolism; urea cycle; L-arginine and fumarate from (N(omega)-L-arginino)succinate: step 1/1. Enzyme activity is regulated by acetylation. Functionally, catalyzes the reversible cleavage of L-argininosuccinate to fumarate and L-arginine, an intermediate step reaction in the urea cycle mostly providing for hepatic nitrogen detoxification into excretable urea as well as de novo L-arginine synthesis in nonhepatic tissues. Essential regulator of intracellular and extracellular L-arginine pools. As part of citrulline-nitric oxide cycle, forms tissue-specific multiprotein complexes with argininosuccinate synthase ASS1, transport protein SLC7A1 and nitric oxide synthase NOS1, NOS2 or NOS3, allowing for cell-autonomous L-arginine synthesis while channeling extracellular L-arginine to nitric oxide synthesis pathway. The polypeptide is Argininosuccinate lyase (ASL) (Macaca fascicularis (Crab-eating macaque)).